The sequence spans 645 residues: 1-deoxy-D-xylulose-5-phosphate synthase (645 aa).

Thiamine diphosphate is bound by residues His-87 and 128 to 130 (GHS). Residue Asp-159 coordinates Mg(2+). Residues 160–161 (GA), Asn-188, Phe-295, and Glu-384 each bind thiamine diphosphate. Asn-188 contributes to the Mg(2+) binding site.

It belongs to the transketolase family. DXPS subfamily. Homodimer. It depends on Mg(2+) as a cofactor. Thiamine diphosphate is required as a cofactor.

The enzyme catalyses D-glyceraldehyde 3-phosphate + pyruvate + H(+) = 1-deoxy-D-xylulose 5-phosphate + CO2. Its pathway is metabolic intermediate biosynthesis; 1-deoxy-D-xylulose 5-phosphate biosynthesis; 1-deoxy-D-xylulose 5-phosphate from D-glyceraldehyde 3-phosphate and pyruvate: step 1/1. Its function is as follows. Catalyzes the acyloin condensation reaction between C atoms 2 and 3 of pyruvate and glyceraldehyde 3-phosphate to yield 1-deoxy-D-xylulose-5-phosphate (DXP). This chain is 1-deoxy-D-xylulose-5-phosphate synthase, found in Alcanivorax borkumensis (strain ATCC 700651 / DSM 11573 / NCIMB 13689 / SK2).